We begin with the raw amino-acid sequence, 487 residues long: Benzaldehyde dehydrogenase [NAD(+)] (487 aa).

An NAD(+)-binding site is contributed by glycine 232–glycine 237. Active-site residues include glutamate 254 and cysteine 288.

The protein belongs to the aldehyde dehydrogenase family. As to quaternary structure, homotetramer.

The enzyme catalyses benzaldehyde + NAD(+) + H2O = benzoate + NADH + 2 H(+). This Pseudomonas putida (Arthrobacter siderocapsulatus) protein is Benzaldehyde dehydrogenase [NAD(+)] (xylC).